Reading from the N-terminus, the 184-residue chain is MNATEMVVLLDDAGTPIGEAPKAGVHTLDTPLHLAFSCYLINDVGEVLLTRRSPEKKTWPGVWTNSFCGHPGPGEEFEDAILRRAQFELGVDANKIELVLPHFRYRAIDPTGIVENEVCPVYVARITGVLNPNPAEVADWAWISPALLADALEHTPSAFSPWLGLQFPQLLEANALPLQAGAEA.

Positions 26 and 33 each coordinate Mn(2+). The Nudix hydrolase domain maps to 31–165 (PLHLAFSCYL…PSAFSPWLGL (135 aa)). The active site involves cysteine 68. Histidine 70 is a Mn(2+) binding site. Glutamate 88 contributes to the Mg(2+) binding site. Glutamate 115 and glutamate 117 together coordinate Mn(2+). Glutamate 117 is an active-site residue.

It belongs to the IPP isomerase type 1 family. The cofactor is Mg(2+). It depends on Mn(2+) as a cofactor.

It localises to the cytoplasm. The catalysed reaction is isopentenyl diphosphate = dimethylallyl diphosphate. The protein operates within isoprenoid biosynthesis; dimethylallyl diphosphate biosynthesis; dimethylallyl diphosphate from isopentenyl diphosphate: step 1/1. In terms of biological role, catalyzes the 1,3-allylic rearrangement of the homoallylic substrate isopentenyl (IPP) to its highly electrophilic allylic isomer, dimethylallyl diphosphate (DMAPP). The chain is Isopentenyl-diphosphate Delta-isomerase from Paenarthrobacter aurescens (strain TC1).